Consider the following 294-residue polypeptide: Beta-glucoside kinase (294 aa).

5 to 11 lines the ATP pocket; sequence AFDIGGT.

This sequence belongs to the ROK (NagC/XylR) family.

It carries out the reaction D-cellobiose + ATP = 6-phospho-beta-D-glucosyl-(1-&gt;4)-D-glucose + ADP + H(+). Functionally, catalyzes the ATP-dependent phosphorylation of cellobiose to produce cellobiose-6'-P. May have a dual role of kinase and transcriptional regulator of the cellobiose-PTS operon. The polypeptide is Beta-glucoside kinase (bglK) (Listeria innocua serovar 6a (strain ATCC BAA-680 / CLIP 11262)).